A 71-amino-acid chain; its full sequence is MPIIKVRENEPFDVALRRFKRSCEKAGILADVRAREFYEKPTTARKRAKAAAVKRLAKKLSRENARRVRLY.

It belongs to the bacterial ribosomal protein bS21 family.

This chain is Small ribosomal subunit protein bS21, found in Shewanella sp. (strain MR-4).